The primary structure comprises 454 residues: tRNA modification GTPase MnmE (454 aa).

(6S)-5-formyl-5,6,7,8-tetrahydrofolate contacts are provided by R23, E80, and K120. The TrmE-type G domain maps to G216–G377. N226 contributes to the K(+) binding site. GTP-binding positions include N226 to S231, T245 to T251, D270 to G273, N335 to D338, and S358 to R360. S230 serves as a coordination point for Mg(2+). T245, I247, and T250 together coordinate K(+). A Mg(2+)-binding site is contributed by T251. K454 lines the (6S)-5-formyl-5,6,7,8-tetrahydrofolate pocket.

It belongs to the TRAFAC class TrmE-Era-EngA-EngB-Septin-like GTPase superfamily. TrmE GTPase family. Homodimer. Heterotetramer of two MnmE and two MnmG subunits. K(+) is required as a cofactor.

The protein localises to the cytoplasm. Its function is as follows. Exhibits a very high intrinsic GTPase hydrolysis rate. Involved in the addition of a carboxymethylaminomethyl (cmnm) group at the wobble position (U34) of certain tRNAs, forming tRNA-cmnm(5)s(2)U34. This is tRNA modification GTPase MnmE from Salmonella gallinarum (strain 287/91 / NCTC 13346).